The following is a 719-amino-acid chain: MSDHLGSSHDEGELSDESHKKSQRASSSDEPNPAKSNKGLESKMRESILSRLSKRKNSESDDDTTEQRFSIQPKNAQKAKEDRYRDKERDKKREKDKRDDRRDVRGPDARQKDRDFKGRQERSGRDQKVHEHRHHHHHRKHETDGHRTNRSNRDRSSERDSEKHKRHIDRHKKSSTTSPDNDKSPHKKSKHTDVPADAKLFDRILDPNYKKKDDDVLVIEDVEMSPIEILEEKEEKEIVEFTIDSPAGPKKYSKFESDPESDHDDTKPKSPGKAEDDDDVIEVLDDALHSDDDADSDEDKYLKTPEDREWEEMTETEQRLHKEAMKKRASMKQKTLIAQLPVFYPGLMGCRNIDEYECVNRVDEGTFGVVYRGKDKRTDEIVALKRLKMEKEKEGFPITALREINMLLKAGNHPNIVNVKEILLGSNMDKIYMAMEFVEHDMKSLLDTMSRRNKRFSIGEQKTLLQQLLSGIEHMHKLWILHRDLKTSNLLMSHKGILKIADFGLAREYGDPLKKFTSIVVTLWYRSPELLLGTRLYSTPVDMWSVGCIMAEFILLKPLFPGRGELEQIKKIFMEMGTPTESIWPGVTELDGWKALTFEKYPYNQLRKRFLAGRLLNDTGFKLLNGLLTLDPKNRFSATQALDHEWFTEEPYPVPPEEFPTFPAKSEQNKAPPPAKQKQQENRISHVDPETAKLLKQFEVRPEQVKPGGFSLKFDPTRF.

Composition is skewed to basic and acidic residues over residues 1–20, 38–48, and 78–129; these read MSDH…ESHK, KGLESKMRESI, and KAKE…DQKV. 2 disordered regions span residues 1–215 and 231–315; these read MSDH…KDDD and EEKE…EMTE. The span at 130 to 140 shows a compositional bias: basic residues; the sequence is HEHRHHHHHRK. Over residues 141 to 163 the composition is skewed to basic and acidic residues; the sequence is HETDGHRTNRSNRDRSSERDSEK. Positions 164–174 are enriched in basic residues; the sequence is HKRHIDRHKKS. Basic and acidic residues-rich tracts occupy residues 191–215 and 264–274; these read HTDV…KDDD and DDTKPKSPGKA. The span at 275 to 285 shows a compositional bias: acidic residues; sequence EDDDDVIEVLD. A Protein kinase domain is found at 356–647; sequence YECVNRVDEG…ATQALDHEWF (292 aa). Residues 362-370 and Lys385 each bind ATP; that span reads VDEGTFGVV. The Proton acceptor role is filled by Asp484. A disordered region spans residues 657–689; it reads EEFPTFPAKSEQNKAPPPAKQKQQENRISHVDP. Residues 678-689 show a composition bias toward basic and acidic residues; the sequence is KQQENRISHVDP.

It belongs to the protein kinase superfamily. CMGC Ser/Thr protein kinase family. CDC2/CDKX subfamily. Broadly expressed in somatic and germ line cells (at protein level). Not expressed in sperm (at protein level).

Its subcellular location is the nucleus. It catalyses the reaction L-seryl-[protein] + ATP = O-phospho-L-seryl-[protein] + ADP + H(+). It carries out the reaction L-threonyl-[protein] + ATP = O-phospho-L-threonyl-[protein] + ADP + H(+). Functionally, probable cyclin-dependent kinase whose activity is most likely regulated by the cyclin cyl-1/Cylin-L. Important for normal oocyte and sperm development; probably required during multiple stages of gametogenesis. Plays a role in the activation of RAS-ERK signaling in the germ line. Also acts partially redundantly with cdk-11.2 to ensure embryonic viability. The chain is Cyclin-dependent kinase 11.1 from Caenorhabditis elegans.